We begin with the raw amino-acid sequence, 269 residues long: MAMVPEITCDEVDFYRDDDDRQFYEADGPNQKKGYFQYPDLCSKESLLEEDGIQLKFTTQPHQFHQTVMVIVAIEKMKHLNGLSSQFFQDNDLMNIFTNIFQEEPITFKNCDIYESDSSFRLVSSQDCTIQDINQKCLALSKASELRALHLNGRNISQQVIFSMKYLLGDIGSQKTHVVLCIKKNNLYLSCVRRGEKPILQLEQIANFPSINVEKRFIFNKVEINNTTEFESAEYPNWYISTSQMDEQPVFLGNIRGGKDITDFILADF.

Positions 1–112 are excised as a propeptide; the sequence is MAMVPEITCD…EEPITFKNCD (112 aa).

This sequence belongs to the IL-1 family. In terms of assembly, monomer. In its precursor form, weakly interacts with full-length MEFV; the mature cytokine does not interact at all. Interacts with integrins ITGAV:ITGBV and ITGA5:ITGB1; integrin-binding is required for IL1B signaling. Interacts with cargo receptor TMED10; the interaction is direct and is required for the secretion of IL1B mature form. Interacts with HSP90AB1; the interaction facilitates cargo translocation into the ERGIC. Interacts with HSP90B1; the interaction facilitates cargo translocation into the ERGIC.

The protein localises to the cytoplasm. It localises to the cytosol. It is found in the secreted. The protein resides in the lysosome. Its subcellular location is the extracellular exosome. Functionally, potent pro-inflammatory cytokine. Initially discovered as the major endogenous pyrogen, induces prostaglandin synthesis, neutrophil influx and activation, T-cell activation and cytokine production, B-cell activation and antibody production, and fibroblast proliferation and collagen production. Promotes Th17 differentiation of T-cells. Synergizes with IL12/interleukin-12 to induce IFNG synthesis from T-helper 1 (Th1) cells. Plays a role in angiogenesis by inducing VEGF production synergistically with TNF and IL6. Involved in transduction of inflammation downstream of pyroptosis: its mature form is specifically released in the extracellular milieu by passing through the gasdermin-D (GSDMD) pore. The protein is Interleukin-1 beta (IL1B) of Trichosurus vulpecula (Brush-tailed possum).